The primary structure comprises 118 residues: Elongin-B (118 aa).

At methionine 1 the chain carries N-acetylmethionine. The 79-residue stretch at 1–79 (MDVFLMIRRH…QAPATVGLAF (79 aa)) folds into the Ubiquitin-like domain. A Phosphothreonine modification is found at threonine 84. Positions 91 to 118 (EPFSSPPELPDVMKPQDSGGSANEQAVQ) are disordered. Phosphoserine occurs at positions 108 and 111. Polar residues predominate over residues 108 to 118 (SGGSANEQAVQ).

Belongs to the Elongin B family. In terms of assembly, heterotrimer of an A (ELOA, ELOA2 or ELOA3P), ELOB and ELOC subunit. The elongin BC complex interacts with EPOP; leading to recruit the elongin BC complex to Polycomb group (PcG) target genes, thereby restricting excessive activity of the PRC2/EED-EZH2 complex. Component of multiple cullin-RING E3 ubiquitin-protein ligase complexes composed of Elongin BC (ELOB and ELOC), a cullin (either CUL2 or CUL5), a catalytic subunit (either RBX1 or RNF7/RBX2), as well as a substrate adapter protein that can be either ASB2, ASB9, ASB11, KLHDC2, KLHDC3, KLHDC10, APPBP2, FEM1A, FEM1B, FEM1C, LRR1, PCMTD1, SOCS1, SOCS2, SOCS5, SPSB1, SPSB3, ELOA, VHL, WSB1 or RAB40C. As part of the Elongin BC E3 ubiquitin ligase complex; interacts with NRBP1. May also interact with DCUN1D1, DCUN1D2, DCUN1D3 and DCUN1D5. May form oligomers as a KLHDC2/KLHDC3-ELOB-ELOC complex; this interaction is autoinhibitory for the E3 ligase complex as the substrate-binding site of KLHDC2/KLHDC3 is blocked in the oligomer.

It localises to the nucleus. The protein operates within protein modification; protein ubiquitination. Its function is as follows. SIII, also known as elongin, is a general transcription elongation factor that increases the RNA polymerase II transcription elongation past template-encoded arresting sites. Subunit A is transcriptionally active and its transcription activity is strongly enhanced by binding to the dimeric complex of the SIII regulatory subunits B and C (elongin BC complex). In embryonic stem cells, the elongin BC complex is recruited by EPOP to Polycomb group (PcG) target genes in order generate genomic region that display both active and repressive chromatin properties, an important feature of pluripotent stem cells. In terms of biological role, core component of multiple cullin-2 and cullin-5-RING E3 ubiquitin-protein ligase complexes (ECS complexes), which mediate the ubiquitination of target proteins. By binding to BC-box motifs it seems to link target recruitment subunits, like VHL and members of the SOCS box family, to Cullin/RBX1 modules that activate E2 ubiquitination enzymes. Component the von Hippel-Lindau ubiquitination complex CBC(VHL). A number of ECS complexes (containing either KLHDC2, KLHDC3, KLHDC10, APPBP2, FEM1A, FEM1B or FEM1C as substrate-recognition component) are part of the DesCEND (destruction via C-end degrons) pathway, which recognizes a C-degron located at the extreme C terminus of target proteins, leading to their ubiquitination and degradation. The ECS(ASB9) complex mediates ubiquitination and degradation of CKB. As part of a multisubunit ubiquitin ligase complex, polyubiquitinates monoubiquitinated POLR2A. ECS(LRR1) ubiquitinates MCM7 and promotes CMG replisome disassembly by VCP and chromatin extraction during S-phase. As part of the ECS(RAB40C) complex, mediates ANKRD28 ubiquitination and degradation, thereby inhibiting protein phosphatase 6 (PP6) complex activity and focal adhesion assembly during cell migration. This is Elongin-B from Mus musculus (Mouse).